The chain runs to 342 residues: uncharacterized protein (342 aa).

The 155-residue stretch at 155 to 309 folds into the Nudix hydrolase domain; it reads TYGIHINGYV…KPNCALVMVD (155 aa).

This is an uncharacterized protein from Saccharomyces cerevisiae (strain ATCC 204508 / S288c) (Baker's yeast).